Consider the following 144-residue polypeptide: Maximins 4/H3 type 1 (144 aa).

An N-terminal signal peptide occupies residues 1–18 (MNFKYIIAVSFFIASAYA). Residues 19-43 (RSEEKDVQSLSQRDVLEEESLREIR) constitute a propeptide that is removed on maturation. The residue at position 70 (asparagine 70) is an Asparagine amide. Residues 74-123 (TAEDHEVMKRLEAVMRDLDSLDHPEEASERETRGFNQEEIANLFTKKEKR) constitute a propeptide that is removed on maturation. Isoleucine 143 carries the isoleucine amide modification.

Belongs to the bombinin family. As to expression, expressed by the skin glands.

It is found in the secreted. In terms of biological role, maximin-4 shows antibacterial activity against both Gram-positive and Gram-negative bacteria. It also shows antimicrobial activity against the fungus C.albicans, but not against A.flavus nor P.uticale. It has little hemolytic activity. It does not possess a significant cytotoxicity against tumor cell lines. It does not possess a significant anti-HIV activity. Maximin-H3 shows antibacterial activity against both Gram-positive and Gram-negative bacteria. It also shows antimicrobial activity against the fungus C.albicans. Shows strong hemolytic activity. The sequence is that of Maximins 4/H3 type 1 from Bombina maxima (Giant fire-bellied toad).